The sequence spans 241 residues: Small ribosomal subunit protein uS2 (241 aa).

It belongs to the universal ribosomal protein uS2 family.

This Buchnera aphidicola subsp. Cinara cedri (strain Cc) protein is Small ribosomal subunit protein uS2.